The chain runs to 282 residues: Bifunctional protein FolD (282 aa).

NADP(+) contacts are provided by residues 164–166 (GAS), Ile189, and Ile230.

It belongs to the tetrahydrofolate dehydrogenase/cyclohydrolase family. In terms of assembly, homodimer.

The enzyme catalyses (6R)-5,10-methylene-5,6,7,8-tetrahydrofolate + NADP(+) = (6R)-5,10-methenyltetrahydrofolate + NADPH. The catalysed reaction is (6R)-5,10-methenyltetrahydrofolate + H2O = (6R)-10-formyltetrahydrofolate + H(+). The protein operates within one-carbon metabolism; tetrahydrofolate interconversion. Its function is as follows. Catalyzes the oxidation of 5,10-methylenetetrahydrofolate to 5,10-methenyltetrahydrofolate and then the hydrolysis of 5,10-methenyltetrahydrofolate to 10-formyltetrahydrofolate. The polypeptide is Bifunctional protein FolD (Nitratiruptor sp. (strain SB155-2)).